Here is a 224-residue protein sequence, read N- to C-terminus: Probable GTP-binding protein EngB (224 aa).

The EngB-type G domain maps to S27 to Q201. GTP contacts are provided by residues G35–S42, G62–L66, D80–G83, T147–D150, and F180–S182. Residues S42 and T64 each coordinate Mg(2+). Positions E205 to E224 are disordered.

Belongs to the TRAFAC class TrmE-Era-EngA-EngB-Septin-like GTPase superfamily. EngB GTPase family. Mg(2+) serves as cofactor.

Functionally, necessary for normal cell division and for the maintenance of normal septation. The protein is Probable GTP-binding protein EngB of Colwellia psychrerythraea (strain 34H / ATCC BAA-681) (Vibrio psychroerythus).